Reading from the N-terminus, the 533-residue chain is MSTLLAPLHPYAGRVVVVGVSGGADSVALLRALVQAEARPVVAHLDHALRPNSAEDAQWVHDLAEQLGAAHTSTRVDVAAVAARRGWNVEDAARRVRYEVLSRAARQHGAHTVMTAHTRRDQAETVLMGLLRGEAVLTGIPAVRGRVRRPWLDVPRSEIEAYLKALGQEWREDPTNADVTYTRAWLRTEVMPVLAARFPGVEAALGRVAKLAQQDDEALRDLAAALTPHAPRDRVPLAVLRRRVTQELKSAGLQFHVGQVDQLAEAQRTGETRHVTLLGGRGVTVTGGALHLAARAWPLPSFSWPEDWTLRTRQPGDRITLPGGTRKVSDVLTDLKIPRDQRDDVPLLVSAQGVKWIGVEPNIWAKGARAVVGQPADLLDTAMGEALGLAREAALAQEVPVGAVVLGPGGRIIGSGRNTSRADSDMTRHAELAALRAATAELGTAYLTGCTLVVTLEPCPMCLGAALEARVERIVYGASNPKAGALGGVSDLLSSHWGHVPAVTGGVRAQDAARVLRDSFQELRQRRLKSPDV.

21–26 (SGGADS) serves as a coordination point for ATP. A CMP/dCMP-type deaminase domain is found at 377-500 (DLLDTAMGEA…DLLSSHWGHV (124 aa)).

The protein belongs to the tRNA(Ile)-lysidine synthase family.

The protein localises to the cytoplasm. The catalysed reaction is cytidine(34) in tRNA(Ile2) + L-lysine + ATP = lysidine(34) in tRNA(Ile2) + AMP + diphosphate + H(+). Ligates lysine onto the cytidine present at position 34 of the AUA codon-specific tRNA(Ile) that contains the anticodon CAU, in an ATP-dependent manner. Cytidine is converted to lysidine, thus changing the amino acid specificity of the tRNA from methionine to isoleucine. The polypeptide is tRNA(Ile)-lysidine synthase (Deinococcus deserti (strain DSM 17065 / CIP 109153 / LMG 22923 / VCD115)).